The sequence spans 29 residues: Kappa-sparatoxin-Hv1e (29 aa).

Cystine bridges form between cysteine 3–cysteine 17, cysteine 10–cysteine 22, and cysteine 16–cysteine 26.

As to expression, expressed by the venom gland.

The protein resides in the secreted. In terms of biological role, inhibitor of voltage-gated potassium channels of the Kv4/KCND family. Blocks calcium channels (Cav). The sequence is that of Kappa-sparatoxin-Hv1e from Heteropoda venatoria (Brown huntsman spider).